Here is a 104-residue protein sequence, read N- to C-terminus: Ribonuclease P protein component 4 (104 aa).

Zn(2+) contacts are provided by C63, C66, C89, and C92.

This sequence belongs to the eukaryotic/archaeal RNase P protein component 4 family. Consists of a catalytic RNA component and at least 4-5 protein subunits. The cofactor is Zn(2+).

It is found in the cytoplasm. It catalyses the reaction Endonucleolytic cleavage of RNA, removing 5'-extranucleotides from tRNA precursor.. Part of ribonuclease P, a protein complex that generates mature tRNA molecules by cleaving their 5'-ends. The chain is Ribonuclease P protein component 4 from Methanoregula boonei (strain DSM 21154 / JCM 14090 / 6A8).